The following is a 519-amino-acid chain: 2-isopropylmalate synthase (519 aa).

A Pyruvate carboxyltransferase domain is found at 12–274; that stretch reads VVIFDTTLRD…WCNVESTTLT (263 aa). Positions 21, 209, 211, and 245 each coordinate Mn(2+). The interval 398–519 is regulatory domain; sequence RLVSLTVIAG…QREAPVAAAS (122 aa).

This sequence belongs to the alpha-IPM synthase/homocitrate synthase family. LeuA type 1 subfamily. As to quaternary structure, homodimer. Mn(2+) serves as cofactor.

The protein resides in the cytoplasm. It catalyses the reaction 3-methyl-2-oxobutanoate + acetyl-CoA + H2O = (2S)-2-isopropylmalate + CoA + H(+). The protein operates within amino-acid biosynthesis; L-leucine biosynthesis; L-leucine from 3-methyl-2-oxobutanoate: step 1/4. In terms of biological role, catalyzes the condensation of the acetyl group of acetyl-CoA with 3-methyl-2-oxobutanoate (2-ketoisovalerate) to form 3-carboxy-3-hydroxy-4-methylpentanoate (2-isopropylmalate). The sequence is that of 2-isopropylmalate synthase from Afipia carboxidovorans (strain ATCC 49405 / DSM 1227 / KCTC 32145 / OM5) (Oligotropha carboxidovorans).